Here is a 471-residue protein sequence, read N- to C-terminus: Protoporphyrinogen oxidase (471 aa).

FAD-binding positions include 16-21, 39-40, A47, 61-64, V251, W408, and 446-448; these read GGGISG, ES, GPNS, and VGL.

Belongs to the protoporphyrinogen/coproporphyrinogen oxidase family. Protoporphyrinogen oxidase subfamily. As to quaternary structure, monomer. Homodimer. FAD serves as cofactor.

The protein resides in the cytoplasm. It localises to the cell membrane. The catalysed reaction is protoporphyrinogen IX + 3 O2 = protoporphyrin IX + 3 H2O2. It participates in porphyrin-containing compound metabolism; protoporphyrin-IX biosynthesis; protoporphyrin-IX from protoporphyrinogen-IX: step 1/1. Its activity is regulated as follows. Strongly inhibited by acifluorfen. Catalyzes the 6-electron oxidation of protoporphyrinogen-IX to form protoporphyrin-IX. Does not oxidize coproporphyrinogen III. Involved in the classical protoporphyrin-dependent (PPD) heme b biosynthesis. This Myxococcus xanthus protein is Protoporphyrinogen oxidase.